The primary structure comprises 118 residues: Large ribosomal subunit protein bL20 (118 aa).

Belongs to the bacterial ribosomal protein bL20 family.

Binds directly to 23S ribosomal RNA and is necessary for the in vitro assembly process of the 50S ribosomal subunit. It is not involved in the protein synthesizing functions of that subunit. The polypeptide is Large ribosomal subunit protein bL20 (Lachnoclostridium phytofermentans (strain ATCC 700394 / DSM 18823 / ISDg) (Clostridium phytofermentans)).